Consider the following 368-residue polypeptide: Probable deoxyhypusine synthase (368 aa).

NAD(+) is bound by residues serine 100–serine 104, threonine 126–glycine 128, glutamate 132, and aspartate 233. Glutamate 131–glutamate 132 is a binding site for spermidine. Position 238 (aspartate 238) interacts with spermidine. Glycine 278 is a binding site for NAD(+). Histidine 283 is a spermidine binding site. Threonine 303–alanine 304 provides a ligand contact to NAD(+). Residues glycine 309–aspartate 311 and glutamate 318–lysine 324 each bind spermidine. Lysine 324 (nucleophile) is an active-site residue. Glutamate 337–alanine 338 is an NAD(+) binding site.

Belongs to the deoxyhypusine synthase family. It depends on NAD(+) as a cofactor.

It carries out the reaction [eIF5A protein]-L-lysine + spermidine = [eIF5A protein]-deoxyhypusine + propane-1,3-diamine. The protein operates within protein modification; eIF5A hypusination. Catalyzes the NAD-dependent oxidative cleavage of spermidine and the subsequent transfer of the butylamine moiety of spermidine to the epsilon-amino group of a specific lysine residue of the eIF-5A precursor protein to form the intermediate deoxyhypusine residue. This Drosophila melanogaster (Fruit fly) protein is Probable deoxyhypusine synthase.